The sequence spans 621 residues: Na(+)/H(+) antiporter NhaA (621 aa).

The tract at residues 1 to 430 (MPASSFGESS…LGWLIFKVAA (430 aa)) is na(+)/H(+) antiporter NhaA. 11 consecutive transmembrane segments (helical) span residues 27–47 (GAAV…NSPL), 72–92 (LHHW…GLEV), 109–129 (LALI…VLIV), 139–159 (GWGA…AIVG), 168–188 (VFLL…IGIV), 192–212 (EIRI…WLLG), 223–243 (VLIV…ASLA), 300–320 (FLRL…NAGV), 339–359 (VIAG…LVAV), 375–395 (VFGG…IIGL), and 409–429 (VGVL…FKVA). One can recognise a Thioredoxin domain in the interval 431–578 (QRWGEKTADL…VERDLASAVA (148 aa)).

This sequence in the N-terminal section; belongs to the NhaA Na(+)/H(+) (TC 2.A.33) antiporter family.

Its subcellular location is the cell inner membrane. It carries out the reaction Na(+)(in) + 2 H(+)(out) = Na(+)(out) + 2 H(+)(in). Functionally, na(+)/H(+) antiporter that extrudes sodium in exchange for external protons. This chain is Na(+)/H(+) antiporter NhaA, found in Herminiimonas arsenicoxydans.